Here is a 557-residue protein sequence, read N- to C-terminus: Nucleoprotein (557 aa).

The tract at residues 54 to 235 is binding site for the cap structure m7GTP; sequence MRKDKRSDDD…ITKEESANNI (182 aa). Residues Asp-379 and Glu-381 each contribute to the Mn(2+) site. Positions 389, 496, 499, and 518 each coordinate Zn(2+). Asp-522 serves as a coordination point for Mn(2+).

Belongs to the arenaviridae nucleocapsid protein family. As to quaternary structure, homomultimerizes to form the nucleocapsid. Binds to viral genomic RNA. Interacts with glycoprotein G2. Interacts with protein Z; this interaction probably directs the encapsidated genome to budding sites. Interacts with protein L; this interaction does not interfere with Z-L interaction. Interacts with host IKBKE (via Protein kinase domain); the interaction inhibits IKBKE kinase activity.

It is found in the virion. Its subcellular location is the host cytoplasm. In terms of biological role, encapsidates the genome, protecting it from nucleases. The encapsidated genomic RNA is termed the nucleocapsid (NC). Serves as template for viral transcription and replication. The increased presence of protein N in host cell does not seem to trigger the switch from transcription to replication as observed in other negative strain RNA viruses. Through the interaction with host IKBKE, strongly inhibits the phosphorylation and nuclear translocation of host IRF3, a protein involved in interferon activation pathway, leading to the inhibition of interferon-beta and IRF3-dependent promoters activation. Also encodes a functional 3'-5' exoribonuclease that degrades preferentially dsRNA substrates and thereby participates in the suppression of interferon induction. In Calomys callosus (Large vesper mouse), this protein is Nucleoprotein.